A 539-amino-acid chain; its full sequence is Hydroxylamine reductase (539 aa).

[4Fe-4S] cluster is bound by residues Cys-3, Cys-6, Cys-14, and Cys-20. Residues His-232, Glu-256, Cys-300, Cys-392, Cys-420, Cys-445, Glu-480, and Lys-482 each contribute to the hybrid [4Fe-2O-2S] cluster site. The residue at position 392 (Cys-392) is a Cysteine persulfide.

Belongs to the HCP family. [4Fe-4S] cluster serves as cofactor. Requires hybrid [4Fe-2O-2S] cluster as cofactor.

It is found in the cytoplasm. It catalyses the reaction A + NH4(+) + H2O = hydroxylamine + AH2 + H(+). Catalyzes the reduction of hydroxylamine to form NH(3) and H(2)O. In Chlorobaculum tepidum (strain ATCC 49652 / DSM 12025 / NBRC 103806 / TLS) (Chlorobium tepidum), this protein is Hydroxylamine reductase.